Reading from the N-terminus, the 748-residue chain is Formate acetyltransferase (748 aa).

The 614-residue stretch at N5–K618 folds into the PFL domain. The active-site S-acetylcysteine intermediate is C412. The active-site Cysteine radical intermediate is C413. In terms of domain architecture, Glycine radical spans P625–M748. G723 bears the Glycine radical mark.

The protein belongs to the glycyl radical enzyme (GRE) family. PFL subfamily. In terms of assembly, homodimer.

The protein localises to the cytoplasm. The catalysed reaction is formate + acetyl-CoA = pyruvate + CoA. The protein operates within fermentation; pyruvate fermentation; formate from pyruvate: step 1/1. Its function is as follows. Catalyzes the conversion of pyruvate to formate and acetyl-CoA. In Staphylococcus epidermidis (strain ATCC 12228 / FDA PCI 1200), this protein is Formate acetyltransferase (pflB).